The chain runs to 311 residues: Probable cell division protein WhiA (311 aa).

The segment at residues 274-308 is a DNA-binding region (H-T-H motif); the sequence is SLKELGEMIPSGAISKSGINHRIRKINEFAEKLRE.

The protein belongs to the WhiA family.

Its function is as follows. Involved in cell division and chromosome segregation. This is Probable cell division protein WhiA from Enterococcus faecalis (strain ATCC 700802 / V583).